Consider the following 306-residue polypeptide: Homeobox protein CUP9 (306 aa).

A disordered region spans residues 75 to 123 (PAINSGGTSTTATPTASTVETSKTSSSAMDTQSQYGSSKKSKSASDDAK). Residues 79–96 (SGGTSTTATPTASTVETS) are compositionally biased toward low complexity. Residues 97–110 (KTSSSAMDTQSQYG) show a composition bias toward polar residues. A DNA-binding region (homeobox; TALE-type) is located at residues 162 to 224 (NSGRRSNLPK…NVRRRKIFSD (63 aa)).

Belongs to the TALE/CUP9 homeobox family.

The protein resides in the nucleus. In terms of biological role, probable DNA-binding protein which plays a role in protecting yeast cells against copper toxicity. May regulate the expression of important copper homeostatic genes. The sequence is that of Homeobox protein CUP9 (CUP9) from Saccharomyces cerevisiae (strain ATCC 204508 / S288c) (Baker's yeast).